The chain runs to 42 residues: Photosystem I reaction center subunit IX (42 aa).

A helical membrane pass occupies residues 7–27 (YLSTAPVLATLWFGFLAGLLI).

This sequence belongs to the PsaJ family.

Its subcellular location is the plastid. It is found in the chloroplast thylakoid membrane. Functionally, may help in the organization of the PsaE and PsaF subunits. The protein is Photosystem I reaction center subunit IX of Marchantia polymorpha (Common liverwort).